The primary structure comprises 688 residues: Glycine--tRNA ligase beta subunit (688 aa).

It belongs to the class-II aminoacyl-tRNA synthetase family. As to quaternary structure, tetramer of two alpha and two beta subunits.

The protein resides in the cytoplasm. It catalyses the reaction tRNA(Gly) + glycine + ATP = glycyl-tRNA(Gly) + AMP + diphosphate. The chain is Glycine--tRNA ligase beta subunit from Syntrophotalea carbinolica (strain DSM 2380 / NBRC 103641 / GraBd1) (Pelobacter carbinolicus).